We begin with the raw amino-acid sequence, 3744 residues long: SAGA complex/NuA4 acetyltransferase complex subunit TRA1 (3744 aa).

N-acetylserine is present on serine 2. 4 HEAT repeats span residues 2 to 40 (SLTE…LLNS), 46 to 92 (FFLQ…NQTF), 94 to 131 (PYAM…SFKS), and 135 to 172 (DKLD…DLDS). Positions 2–2598 (SLTEQIEQFA…KPYHTRQISS (2597 aa)) are HEAT. Serine 172 is subject to Phosphoserine. The segment covering 185–195 (FSKNDEEKDFP) has biased composition (basic and acidic residues). The segment at 185-212 (FSKNDEEKDFPSKQSSTEPRFENSTSSN) is disordered. The span at 196–212 (SKQSSTEPRFENSTSSN) shows a compositional bias: polar residues. HEAT repeat units lie at residues 247–284 (PEFT…ISTE), 319–357 (QDYV…ILST), and 437–477 (KLLL…RFKT). Residues 522–539 (LEPSDDDHLMPQPKKEDI) show a composition bias toward basic and acidic residues. The segment at 522 to 546 (LEPSDDDHLMPQPKKEDINDSPDVE) is disordered. Serine 542 carries the post-translational modification Phosphoserine. HEAT repeat units lie at residues 588 to 628 (RTLM…VFSY), 734 to 771 (PNFA…LSFM), 779 to 821 (INEV…SIGG), 829 to 867 (RSIK…TVPV), 870 to 910 (SVLA…NLTA), 919 to 958 (PVID…RNRQ), 1074 to 1112 (NQEN…HFCL), 1188 to 1225 (SFIP…NVKS), 1283 to 1320 (KVLE…LTGI), 1369 to 1408 (TFNE…SEQL), 1435 to 1472 (NIRI…ENSK), 1476 to 1512 (ELLQ…LLIA), 1693 to 1734 (LKLK…RFTE), 1739 to 1776 (DQNP…SSNK), 1918 to 1955 (FPIK…VLHE), 2115 to 2155 (ELGL…LDSE), 2182 to 2219 (ENLP…AIKA), 2230 to 2267 (SPGK…FMNF), 2269 to 2307 (DNIV…ARIT), and 2536 to 2573 (IISS…SIPK). The interval 2599-3744 (RTNVINMLLD…RTDVNFMPWF (1146 aa)) is head. In terms of domain architecture, FAT spans 2622 to 3177 (LVKYLAISYN…HFQLRTTKED (556 aa)). The PI3K/PI4K catalytic domain maps to 3374-3732 (FLPTVDFVRG…CIGSAVSPRN (359 aa)). A G-loop region spans residues 3380–3386 (FVRGTHS). The tract at residues 3563 to 3571 (MINNRTPHK) is catalytic loop. An activation loop region spans residues 3600–3625 (LKNHDLSLPPDSPIFHNNEPVPFRLT). The region spanning 3712-3744 (TPTVTTQFILDCIGSAVSPRNLARTDVNFMPWF) is the FATC domain.

Belongs to the PI3/PI4-kinase family. TRA1 subfamily. Component of the 1.8 MDa SAGA (Spt-Ada-Gcn5 acetyltransferase) complex, which is composed of 19 subunits TRA1, SPT7, TAF5, NGG1/ADA3, SGF73, SPT20/ADA5, SPT8, TAF12, TAF6, HFI1/ADA1, UBP8, GCN5, ADA2, SPT3, SGF29, TAF10, TAF9, SGF11 and SUS1. The SAGA complex is composed of 4 modules, namely the HAT (histone acetyltransferase) module (GCN5, ADA2, NGG1/ADA3 and SGF29), the DUB (deubiquitinating) module (UBP8, SGF11, SGF73 and SUS1), the core or TAF (TBP-associated factor) module (TAF5, TAF6, TAF9, TAF10 and TAF12), and the Tra1 or SPT (Suppressor of Ty) module (TRA1, HFI1/ADA1, SPT3, SPT7, SPT8 and SPT20/ADA5). The Tra1/SPT module binds activators, the core module recruits TBP (TATA-binding protein), the HAT module contains the histone H3 acetyltransferase GCN5, and the DUB module comprises the histone H2B deubiquitinase UBP8. Also identified in an altered form of SAGA, named SALSA (SAGA altered, Spt8 absent) or SLIK (SAGA-like) complex, which contains a C-terminal truncated form of SPT7 and is missing SPT8. However, it has been shown that the SAGA and SAGA-like SALSA/SLIK transcriptional coactivators are structurally and biochemically equivalent. Component of the NuA4 acetyltransferase complex, which consists of the catalytic subunit ESA1 and the 12 non-catalytic subunits ACT1, ARP4, EAF1/VID21, SWC4/EAF2, EAF3, EAF5, EAF6, EAF7, EPL1, TRA1, YAF9 and YNG2. TRA1 is the scaffold subunit for binding to a variety of transcription activators or transcription factors to recruit NuA4 for targeted gene activation. Identified in the Ada.spt complex with NGG1/ADA3 and SPT7.

The protein localises to the nucleus. Its function is as follows. Essential scaffold subunit of the transcription coactivator SAGA complex. SAGA acts as a general cofactor required for essentially all RNA polymerase II transcription. At the promoters, SAGA is required for transcription pre-initiation complex (PIC) recruitment. It influences RNA polymerase II transcriptional activity through different activities such as TBP interaction (via core/TAF module) and promoter selectivity, interaction with transcription activators (via Tra1/SPT module), and chromatin modification through histone acetylation (via HAT module) and deubiquitination (via DUB module). SAGA preferentially acetylates histones H3 (to form H3K9ac, H3K14ac, H3K18ac and H3K23ac) and H2B and deubiquitinates histone H2B. SAGA interacts with DNA via upstream activating sequences (UASs). Also identified in a modified version of SAGA named SALSA or SLIK. The cleavage of SPT7 and the absence of the SPT8 subunit in SLIK neither drive any major conformational differences in its structure compared with SAGA, nor significantly affect HAT, DUB, or DNA-binding activities. Component of the NuA4 histone H4/H2A acetyltransferase involved in transcription and DNA repair. The chain is SAGA complex/NuA4 acetyltransferase complex subunit TRA1 from Saccharomyces cerevisiae (strain ATCC 204508 / S288c) (Baker's yeast).